A 148-amino-acid chain; its full sequence is UPF0260 protein YcgN (148 aa).

The protein belongs to the UPF0260 family.

This is UPF0260 protein YcgN from Salmonella paratyphi A (strain AKU_12601).